The following is a 387-amino-acid chain: 3-hydroxyisobutyryl-CoA hydrolase-like protein 5 (387 aa).

Alanine 2 carries the N-acetylalanine modification.

It belongs to the enoyl-CoA hydratase/isomerase family.

The protein is 3-hydroxyisobutyryl-CoA hydrolase-like protein 5 of Arabidopsis thaliana (Mouse-ear cress).